Reading from the N-terminus, the 203-residue chain is ATP-dependent Clp protease proteolytic subunit 2 (203 aa).

Catalysis depends on S98, which acts as the Nucleophile. Residue H123 is part of the active site.

It belongs to the peptidase S14 family. As to quaternary structure, fourteen ClpP subunits assemble into 2 heptameric rings which stack back to back to give a disk-like structure with a central cavity, resembling the structure of eukaryotic proteasomes.

The protein localises to the cytoplasm. It catalyses the reaction Hydrolysis of proteins to small peptides in the presence of ATP and magnesium. alpha-casein is the usual test substrate. In the absence of ATP, only oligopeptides shorter than five residues are hydrolyzed (such as succinyl-Leu-Tyr-|-NHMec, and Leu-Tyr-Leu-|-Tyr-Trp, in which cleavage of the -Tyr-|-Leu- and -Tyr-|-Trp bonds also occurs).. In terms of biological role, cleaves peptides in various proteins in a process that requires ATP hydrolysis. Has a chymotrypsin-like activity. Plays a major role in the degradation of misfolded proteins. This chain is ATP-dependent Clp protease proteolytic subunit 2, found in Chlamydia pneumoniae (Chlamydophila pneumoniae).